A 484-amino-acid polypeptide reads, in one-letter code: Aldehyde dehydrogenase family 3 member A2 (484 aa).

The Cytoplasmic portion of the chain corresponds to Met1 to Arg463. Gly185–Gly190 serves as a coordination point for NAD(+). Catalysis depends on residues Glu207 and Cys241. Ser293 bears the Phosphoserine mark. Residues Leu464–Leu484 traverse the membrane as a helical segment. Positions Lys481–Leu484 match the Prevents secretion from ER motif.

It belongs to the aldehyde dehydrogenase family. Homodimer.

It localises to the membrane. Its subcellular location is the microsome membrane. The protein resides in the endoplasmic reticulum membrane. The enzyme catalyses an aldehyde + NAD(+) + H2O = a carboxylate + NADH + 2 H(+). It catalyses the reaction a fatty aldehyde + NAD(+) + H2O = a fatty acid + NADH + 2 H(+). It carries out the reaction hexadecanoate + NADH + 2 H(+) = hexadecanal + NAD(+) + H2O. The catalysed reaction is octanal + NAD(+) + H2O = octanoate + NADH + 2 H(+). The enzyme catalyses (2E)-hexadecenal + NAD(+) + H2O = (E)-hexadec-2-enoate + NADH + 2 H(+). It catalyses the reaction 22-oxodocosanoate + NAD(+) + H2O = docosanedioate + NADH + 2 H(+). It carries out the reaction 2,6,10,14-tetramethylpentadecanal + NAD(+) + H2O = 2,6,10,14-tetramethylpentadecanoate + NADH + 2 H(+). The catalysed reaction is octadecanal + NAD(+) + H2O = octadecanoate + NADH + 2 H(+). The enzyme catalyses dodecanoate + NADH + 2 H(+) = dodecanal + NAD(+) + H2O. It catalyses the reaction decanal + NAD(+) + H2O = decanoate + NADH + 2 H(+). It carries out the reaction tetradecanal + NAD(+) + H2O = tetradecanoate + NADH + 2 H(+). The catalysed reaction is heptanal + NAD(+) + H2O = heptanoate + NADH + 2 H(+). The enzyme catalyses (2E,6E)-farnesal + NAD(+) + H2O = (2E,6E)-farnesoate + NADH + 2 H(+). Catalyzes the oxidation of medium and long-chain aliphatic aldehydes to fatty acids. Active on a variety of saturated and unsaturated aliphatic aldehydes between 6 and 24 carbons in length. Responsible for conversion of the sphingosine 1-phosphate (S1P) degradation product hexadecenal to hexadecenoic acid. The protein is Aldehyde dehydrogenase family 3 member A2 (Aldh3a2) of Mus musculus (Mouse).